Here is a 309-residue protein sequence, read N- to C-terminus: Curved DNA-binding protein (309 aa).

In terms of domain architecture, J spans 5 to 69 (DYYAILGVKP…ERRAEYDQLR (65 aa)).

It localises to the cytoplasm. Its subcellular location is the nucleoid. In terms of biological role, DNA-binding protein that preferentially recognizes a curved DNA sequence. It is probably a functional analog of DnaJ; displays overlapping activities with DnaJ, but functions under different conditions, probably acting as a molecular chaperone in an adaptive response to environmental stresses other than heat shock. Lacks autonomous chaperone activity; binds native substrates and targets them for recognition by DnaK. Its activity is inhibited by the binding of CbpM. The polypeptide is Curved DNA-binding protein (Serratia proteamaculans (strain 568)).